The chain runs to 445 residues: GTPase Der (445 aa).

2 consecutive EngA-type G domains span residues 3 to 167 and 180 to 353; these read PVIA…YAGQ and VKIA…AAAM. GTP contacts are provided by residues 9 to 16, 56 to 60, 119 to 122, 186 to 193, 233 to 237, and 298 to 301; these read GRPNVGKS, DTGGF, NKAE, DTAGL, and NKWD. Positions 354–438 constitute a KH-like domain; that stretch reads AKLPTPKLTR…PLRIEFRSST (85 aa).

The protein belongs to the TRAFAC class TrmE-Era-EngA-EngB-Septin-like GTPase superfamily. EngA (Der) GTPase family. As to quaternary structure, associates with the 50S ribosomal subunit.

Its function is as follows. GTPase that plays an essential role in the late steps of ribosome biogenesis. This chain is GTPase Der, found in Paraburkholderia xenovorans (strain LB400).